Consider the following 167-residue polypeptide: Phosphopantetheine adenylyltransferase (167 aa).

Ser-10 contributes to the substrate binding site. Residues Ser-10 to Phe-11 and His-18 contribute to the ATP site. The substrate site is built by Lys-42, Ala-79, and Arg-93. ATP is bound by residues Gly-94 to Arg-96, Glu-104, and Val-129 to Thr-135.

The protein belongs to the bacterial CoaD family. Homohexamer. Mg(2+) is required as a cofactor.

The protein localises to the cytoplasm. The enzyme catalyses (R)-4'-phosphopantetheine + ATP + H(+) = 3'-dephospho-CoA + diphosphate. It participates in cofactor biosynthesis; coenzyme A biosynthesis; CoA from (R)-pantothenate: step 4/5. In terms of biological role, reversibly transfers an adenylyl group from ATP to 4'-phosphopantetheine, yielding dephospho-CoA (dPCoA) and pyrophosphate. The sequence is that of Phosphopantetheine adenylyltransferase from Beijerinckia indica subsp. indica (strain ATCC 9039 / DSM 1715 / NCIMB 8712).